A 666-amino-acid chain; its full sequence is Probable potassium transport system protein Kup (666 aa).

12 consecutive transmembrane segments (helical) span residues 16-36 (GFII…LYTM), 58-78 (ISLI…LIAL), 98-118 (ISPW…SDGA), 141-161 (IYQN…VLFG), 165-185 (FGTG…FSFL), 221-241 (IFIL…YSDL), 253-273 (WPFV…WILA), 299-319 (LATL…FTLI), 343-363 (LYIP…VLAF), 373-393 (YGLA…YYLI), 399-419 (PILA…FFLA), and 424-444 (FMHG…VMFI).

It belongs to the HAK/KUP transporter (TC 2.A.72) family.

It is found in the cell membrane. The catalysed reaction is K(+)(in) + H(+)(in) = K(+)(out) + H(+)(out). Its function is as follows. Transport of potassium into the cell. Likely operates as a K(+):H(+) symporter. This chain is Probable potassium transport system protein Kup, found in Streptococcus pyogenes serotype M28 (strain MGAS6180).